A 228-amino-acid chain; its full sequence is DNA mismatch repair protein MutH (228 aa).

Belongs to the MutH family.

It is found in the cytoplasm. Functionally, sequence-specific endonuclease that cleaves unmethylated GATC sequences. It is involved in DNA mismatch repair. This chain is DNA mismatch repair protein MutH, found in Photorhabdus laumondii subsp. laumondii (strain DSM 15139 / CIP 105565 / TT01) (Photorhabdus luminescens subsp. laumondii).